The following is a 148-amino-acid chain: NADPH-dependent 7-cyano-7-deazaguanine reductase (148 aa).

Cysteine 50 serves as the catalytic Thioimide intermediate. Aspartate 57 functions as the Proton donor in the catalytic mechanism. Substrate contacts are provided by residues 72–74 and 91–92; these read VES and HE.

This sequence belongs to the GTP cyclohydrolase I family. QueF type 1 subfamily.

It is found in the cytoplasm. It catalyses the reaction 7-aminomethyl-7-carbaguanine + 2 NADP(+) = 7-cyano-7-deazaguanine + 2 NADPH + 3 H(+). Its pathway is tRNA modification; tRNA-queuosine biosynthesis. In terms of biological role, catalyzes the NADPH-dependent reduction of 7-cyano-7-deazaguanine (preQ0) to 7-aminomethyl-7-deazaguanine (preQ1). This Helicobacter pylori (strain HPAG1) protein is NADPH-dependent 7-cyano-7-deazaguanine reductase.